The chain runs to 99 residues: Protein translation factor SUI1 homolog (99 aa).

It belongs to the SUI1 family.

The polypeptide is Protein translation factor SUI1 homolog (Pyrococcus horikoshii (strain ATCC 700860 / DSM 12428 / JCM 9974 / NBRC 100139 / OT-3)).